The sequence spans 288 residues: Small ribosomal subunit protein uS2 (288 aa).

Belongs to the universal ribosomal protein uS2 family. As to quaternary structure, component of the small ribosomal subunit. Mature ribosomes consist of a small (40S) and a large (60S) subunit. The 40S subunit contains about 33 different proteins and 1 molecule of RNA (18S). The 60S subunit contains about 49 different proteins and 3 molecules of RNA (28S, 5.8S and 5S). Interacts with ribosomal protein S21.

Its subcellular location is the cytoplasm. Required for the assembly and/or stability of the 40S ribosomal subunit. Required for the processing of the 20S rRNA-precursor to mature 18S rRNA in a late step of the maturation of 40S ribosomal subunits. The chain is Small ribosomal subunit protein uS2 from Aedes aegypti (Yellowfever mosquito).